Reading from the N-terminus, the 309-residue chain is Porphobilinogen deaminase (309 aa).

S-(dipyrrolylmethanemethyl)cysteine is present on Cys241.

It belongs to the HMBS family. In terms of assembly, monomer. Requires dipyrromethane as cofactor.

It carries out the reaction 4 porphobilinogen + H2O = hydroxymethylbilane + 4 NH4(+). It functions in the pathway porphyrin-containing compound metabolism; protoporphyrin-IX biosynthesis; coproporphyrinogen-III from 5-aminolevulinate: step 2/4. In terms of biological role, tetrapolymerization of the monopyrrole PBG into the hydroxymethylbilane pre-uroporphyrinogen in several discrete steps. This chain is Porphobilinogen deaminase, found in Bacillus mycoides (strain KBAB4) (Bacillus weihenstephanensis).